The sequence spans 307 residues: Opsin-like protein carO (307 aa).

N-linked (GlcNAc...) asparagine glycosylation is present at Asn28. The next 7 membrane-spanning stretches (helical) occupy residues 36-56, 64-84, 118-138, 140-160, 166-186, 202-222, and 235-255; these read WYWA…GLGM, IFHY…FTMA, WFLT…MPWP, VLWV…GALV, WGYF…LAWE, FVMC…AWGV, and AVFY…LLLW. The segment at 280–307 is disordered; it reads GPNNKVASGHGARNDTATASGSNVNPNA. The N-linked (GlcNAc...) asparagine glycan is linked to Asn293. Over residues 294–307 the composition is skewed to polar residues; the sequence is DTATASGSNVNPNA.

It belongs to the archaeal/bacterial/fungal opsin family.

Its subcellular location is the membrane. In terms of biological role, opsin-like protein; part of the car gene cluster that mediates the biosynthesis of neurosporaxanthin, a carboxylic apocarotenoid acting as an essential protective pigment and leading to orange pigmentation. The exact role of carO in carotenoid biosynthesis is not known yet, but it could be involved in the regulation of the pathway by light or other stimuli. The sequence is that of Opsin-like protein carO from Fusarium fujikuroi (Bakanae and foot rot disease fungus).